Reading from the N-terminus, the 155-residue chain is Large ribosomal subunit protein bL17 (155 aa).

Belongs to the bacterial ribosomal protein bL17 family. Part of the 50S ribosomal subunit. Contacts protein L32.

The polypeptide is Large ribosomal subunit protein bL17 (Bifidobacterium adolescentis (strain ATCC 15703 / DSM 20083 / NCTC 11814 / E194a)).